A 664-amino-acid chain; its full sequence is Two-component response regulator ARR2 (664 aa).

Residues methionine 1 to serine 21 are disordered. Positions arginine 29–valine 144 constitute a Response regulatory domain. Residue aspartate 80 is modified to 4-aspartylphosphate. The tract at residues tryptophan 151 to lysine 215 is disordered. Residues glycine 165 to alanine 178 are compositionally biased toward basic and acidic residues. Polar residues predominate over residues asparagine 180–arginine 191. Residues glutamate 200–glutamate 209 show a composition bias toward acidic residues. Positions lysine 215–arginine 218 match the Nuclear localization signal motif. Positions arginine 218–arginine 268 form a DNA-binding region, myb-like GARP. A compositionally biased stretch (low complexity) spans alanine 554–threonine 567. The segment at alanine 554 to proline 589 is disordered.

This sequence belongs to the ARR family. Type-B subfamily. Binds the target DNA as a monomer. Interacts with histidine-containing phosphotransfer proteins. In terms of processing, two-component system major event consists of a His-to-Asp phosphorelay between a sensor histidine kinase (HK) and a response regulator (RR). In plants, the His-to-Asp phosphorelay involves an additional intermediate named Histidine-containing phosphotransfer protein (HPt). This multistep phosphorelay consists of a His-Asp-His-Asp sequential transfer of a phosphate group between first a His and an Asp of the HK protein, followed by the transfer to a conserved His of the HPt protein and finally the transfer to an Asp in the receiver domain of the RR protein. Phosphorylated in response to cytokinin mediated by AHK3. Detected in the whole plant. Predominantly expressed in pollen.

It localises to the nucleus. Functionally, transcriptional activator that binds specifically to the DNA sequence 5'-[AG]GATT-3'. Functions as a response regulator involved in His-to-Asp phosphorelay signal transduction system. Phosphorylation of the Asp residue in the receiver domain activates the ability of the protein to promote the transcription of target genes. Could directly activate some type-A response regulators in response to cytokinins. Involved in the expression of nuclear genes for components of mitochondrial complex I. Promotes cytokinin-mediated leaf longevity. Involved in the ethylene signaling pathway in an ETR1-dependent manner and in the cytokinin signaling pathway. This chain is Two-component response regulator ARR2 (ARR2), found in Arabidopsis thaliana (Mouse-ear cress).